We begin with the raw amino-acid sequence, 492 residues long: GDP-fucose protein O-fucosyltransferase 4 (492 aa).

Residues 1–7 (MAAGPIR) lie on the Cytoplasmic side of the membrane. A helical; Signal-anchor for type II membrane protein transmembrane segment spans residues 8–24 (VVLVLLGVLSVCAASGH). Residues 25-492 (GSVAEREAGG…HEIFMKRQHL (468 aa)) are Lumenal-facing. N-linked (GlcNAc...) asparagine glycosylation occurs at asparagine 166. Cysteine 389 and cysteine 392 are disulfide-bonded. An N-linked (GlcNAc...) asparagine glycan is attached at asparagine 443.

The protein belongs to the glycosyltransferase 10 family.

The protein resides in the endoplasmic reticulum membrane. The enzyme catalyses L-threonyl-[protein] + GDP-beta-L-fucose = 3-O-(alpha-L-fucosyl)-L-threonyl-[protein] + GDP + H(+). It catalyses the reaction L-seryl-[protein] + GDP-beta-L-fucose = 3-O-(alpha-L-fucosyl)-L-seryl-[protein] + GDP + H(+). It participates in protein modification; protein glycosylation. Its function is as follows. Protein O-fucosyltransferase that specifically catalyzes O-fucosylation of serine or threonine residues in EMI domains of target proteins, such as MMRN1, MMRN2 and EMID1. Attaches fucose through an O-glycosidic linkage. O-fucosylation of EMI domain-containing proteins may be required for facilitating protein folding and secretion. Also shows minor alpha-(1,3)-fucosyltransferase activity toward activity toward biantennary N-glycan acceptors. However, this was tested with a library of synthetic substrates and this activity is unsure in vivo. The protein is GDP-fucose protein O-fucosyltransferase 4 of Homo sapiens (Human).